The chain runs to 496 residues: MRRATLIPLAIWVAGAAAAAAASLPQFPSCDISLANIGLSQNSQIFFPNGSGWESETIRWTKYMAPTYAVSVRPAHVSDVTQVRFATRCKIPFLASSGQHGFDTELAELQNGMEIDLSAFRNVSVDAKKNTLTVGGGVRFMDVFDPVFNAGKEIRTSETDHQVGTGSGACVGMISPTLGGGVGRLSGTHGIISDQLLSVQMVTANGSLVTVSKKENSNLFWGLRGAGGNFGIVVEAVYQVTDLTSEKVVNLDYAFSTNDTGAIIDYLALFGPNMPPKLSFIIAALYNEKLFGGVGDPGCVDPNRGRQSANTIPPSLFQFAVIVSGLYAGPQSEAEQLLAPLLQNATLIKQNISVVPENKLVYAATFGSQGNSTIACSGKGVNRSIFGGAINTYDKATYVDFLKAFGDLVTTNTDLRGSVFFIEHFSNYQVQKIPDHTSAYPWRDITAHLLFNYAWNDPANQQLMLYSARKLPRLRALKKEWDPENVFRFHHPISMS.

Positions 1–21 (MRRATLIPLAIWVAGAAAAAA) are cleaved as a signal peptide. 8 N-linked (GlcNAc...) asparagine glycosylation sites follow: Asn49, Asn122, Asn205, Asn258, Asn344, Asn351, Asn371, and Asn382. Positions 64–243 (MAPTYAVSVR…VEAVYQVTDL (180 aa)) constitute an FAD-binding PCMH-type domain.

It belongs to the oxygen-dependent FAD-linked oxidoreductase family. Requires FAD as cofactor.

Functionally, FAD-linked oxidoreductase; part of the gene cluster that mediates the biosynthesis of fumigermin that inhibits germination of spores of the inducing S.rapamycinicus, and thus helps the fungus to defend resources in the shared habitat against a bacterial competitor. The partially reducing polyketide synthase fngA alone is sufficient for the production of fumigermin. FgnA catalyzes the condensation of 3 malonyl-CoA units to an acetyl-CoA starter, and 3 methylations to yield fumigermin. It is remarkable that the five cluster genes including fgnA are conserved in distantly related fungi, supporting the assumption of a fumigermin cluster; it is thus possible that originally all five genes were functional, but that the genes encoding tailoring enzymes became inactive from mutations, similar to the case of the fgnA gene in strains A1163 and Af293. The chain is FAD-linked oxidoreductase AFUA_1G00980 from Aspergillus fumigatus (strain ATCC MYA-4609 / CBS 101355 / FGSC A1100 / Af293) (Neosartorya fumigata).